Here is a 1217-residue protein sequence, read N- to C-terminus: ATP-dependent RNA helicase DHX30 (1217 aa).

D15 and S29 each carry phosphoserine. The 69-residue stretch at 76–144 (PKNLLNSVIG…QAAAAACQLF (69 aa)) folds into the DRBM domain. A disordered region spans residues 176-223 (WWRPEPTMPPTSWRQLNPENIRPGGPAGLSRSLGREEEEDEEEELEEG). A compositionally biased stretch (acidic residues) spans 211–223 (EEEEDEEEELEEG). 2 positions are modified to phosphoserine: S249 and S403. A Helicase ATP-binding domain is found at 467-635 (LSAIEQHPVV…FGGCPVIKVP (169 aa)). 480–487 (GDTGCGKT) lines the ATP pocket. The DEAH box motif lies at 582-585 (DEVH). The 174-residue stretch at 677–850 (LVTDLVLHID…NLVLQAKIHM (174 aa)) folds into the Helicase C-terminal domain.

Belongs to the DEAD box helicase family. DEAH subfamily. As to quaternary structure, identified in a complex with TFAM and SSBP1. Interacts (via N-terminus) with ZC3HAV1 (via N-terminal domain) in an RNA-independent manner. Found in a complex with GRSF1, DDX28, FASTKD2 and FASTKD5. In terms of processing, phosphorylated on Ser-15. As to expression, expressed in the heart, brain, spleen, lung, liver, skeletal muscle, kidney, and testis. Expression is strongest in the testis and brain, while the lowest levels of expression are found in the spleen and lung.

The protein localises to the cytoplasm. Its subcellular location is the mitochondrion. It localises to the mitochondrion matrix. The protein resides in the mitochondrion nucleoid. It carries out the reaction ATP + H2O = ADP + phosphate + H(+). Its function is as follows. RNA-dependent helicase. Plays an important role in the assembly of the mitochondrial large ribosomal subunit. Required for optimal function of the zinc-finger antiviral protein ZC3HAV1. Associates with mitochondrial DNA. Involved in nervous system development and differentiation through its involvement in the up-regulation of a number of genes which are required for neurogenesis, including GSC, NCAM1, neurogenin, and NEUROD. This chain is ATP-dependent RNA helicase DHX30 (Dhx30), found in Mus musculus (Mouse).